We begin with the raw amino-acid sequence, 34 residues long: Protein MgtT (34 aa).

Positions 1-34 (MNGDNPSPNRPLVTVVYKGPDFYDGEKKPPVNRR) are disordered. Over residues 24–34 (DGEKKPPVNRR) the composition is skewed to basic and acidic residues.

The chain is Protein MgtT from Escherichia coli (strain K12).